The following is a 215-amino-acid chain: Proteasome subunit beta type-1 (215 aa).

Met1 carries the post-translational modification N-acetylmethionine. Residues 1–19 constitute a propeptide, removed in mature form; it reads MNGIQVDINRLKKGEVSLG. Thr20 serves as the catalytic Nucleophile.

The protein belongs to the peptidase T1B family. The 26S proteasome consists of a 20S proteasome core and two 19S regulatory subunits. The 20S proteasome core is composed of 28 subunits that are arranged in four stacked rings, resulting in a barrel-shaped structure. The two end rings are each formed by seven alpha subunits, and the two central rings are each formed by seven beta subunits. The catalytic chamber with the active sites is on the inside of the barrel.

It is found in the cytoplasm. The protein resides in the nucleus. It carries out the reaction Cleavage of peptide bonds with very broad specificity.. Its function is as follows. The proteasome degrades poly-ubiquitinated proteins in the cytoplasm and in the nucleus. It is essential for the regulated turnover of proteins and for the removal of misfolded proteins. The proteasome is a multicatalytic proteinase complex that is characterized by its ability to cleave peptides with Arg, Phe, Tyr, Leu, and Glu adjacent to the leaving group at neutral or slightly basic pH. It has an ATP-dependent proteolytic activity. PRE3 and PRE4 are necessary for the peptidyl-glutamyl-peptide-hydrolyzing activity. This subunit is necessary for the peptidylglutamyl-peptide hydrolyzing activity. This is Proteasome subunit beta type-1 (PRE3) from Saccharomyces cerevisiae (strain ATCC 204508 / S288c) (Baker's yeast).